A 539-amino-acid chain; its full sequence is Berberine bridge enzyme-like 21 (539 aa).

An N-terminal signal peptide occupies residues 1–26; that stretch reads MIATQTFVSVFFFVFFLVSLPFFSSA. An intrachain disulfide couples cysteine 41 to cysteine 104. Asparagine 79 carries N-linked (GlcNAc...) asparagine glycosylation. Residues 82–256 enclose the FAD-binding PCMH-type domain; it reads STPKPAIIVT…LGYKVKLVPV (175 aa). Residues 119–181 constitute a cross-link (6-(S-cysteinyl)-8alpha-(pros-histidyl)-FAD (His-Cys)); that stretch reads HDYEGLSYIS…KVHGFPAGVC (63 aa). Asparagine 340 carries an N-linked (GlcNAc...) asparagine glycan.

Belongs to the oxygen-dependent FAD-linked oxidoreductase family. FAD is required as a cofactor. Post-translationally, the FAD cofactor is bound via a bicovalent 6-S-cysteinyl, 8alpha-N1-histidyl FAD linkage.

Its subcellular location is the secreted. It is found in the cell wall. The chain is Berberine bridge enzyme-like 21 from Arabidopsis thaliana (Mouse-ear cress).